The chain runs to 199 residues: CASP-like protein 4C1 (199 aa).

Residues 1–35 (MESGSVANDSGPLNSTPDVHLYGKTAAMKQRRSNT) are Cytoplasmic-facing. Residues 36-56 (MLFVFRLLTFSFSLAAVLVMG) traverse the membrane as a helical segment. Over 57-80 (TNKQKIRSAPQYLEVAWHDFDPFR) the chain is Extracellular. A helical membrane pass occupies residues 81–101 (YVFAVNAIICVYSFVETWLAV). Residues 102-124 (YTLSRGTLLLPETFQVWFDYGHD) are Cytoplasmic-facing. Residues 125–145 (QGFACLLFSANSVGIAMAQLL) form a helical membrane-spanning segment. Over 146–169 (QSGSTLIQGQYYCSDAGAYCTQAR) the chain is Extracellular. A helical transmembrane segment spans residues 170-190 (VSIAMGFGAFLFLALSSFLTG). The Cytoplasmic segment spans residues 191–199 (LRVARWYLP).

The protein belongs to the Casparian strip membrane proteins (CASP) family. As to quaternary structure, homodimer and heterodimers.

Its subcellular location is the cell membrane. In Physcomitrium patens (Spreading-leaved earth moss), this protein is CASP-like protein 4C1.